Here is a 130-residue protein sequence, read N- to C-terminus: Small ribosomal subunit protein uS9 (130 aa).

This sequence belongs to the universal ribosomal protein uS9 family.

In Shigella flexneri, this protein is Small ribosomal subunit protein uS9 (rpsI).